A 360-amino-acid chain; its full sequence is Phosphoserine aminotransferase (360 aa).

Arg-41 serves as a coordination point for L-glutamate. Pyridoxal 5'-phosphate contacts are provided by residues 75 to 76 (AS), Trp-99, Thr-152, Asp-171, and Gln-194. Lys-195 is modified (N6-(pyridoxal phosphate)lysine). Pyridoxal 5'-phosphate is bound at residue 236-237 (NT).

It belongs to the class-V pyridoxal-phosphate-dependent aminotransferase family. SerC subfamily. As to quaternary structure, homodimer. The cofactor is pyridoxal 5'-phosphate.

It localises to the cytoplasm. The enzyme catalyses O-phospho-L-serine + 2-oxoglutarate = 3-phosphooxypyruvate + L-glutamate. The catalysed reaction is 4-(phosphooxy)-L-threonine + 2-oxoglutarate = (R)-3-hydroxy-2-oxo-4-phosphooxybutanoate + L-glutamate. It participates in amino-acid biosynthesis; L-serine biosynthesis; L-serine from 3-phospho-D-glycerate: step 2/3. It functions in the pathway cofactor biosynthesis; pyridoxine 5'-phosphate biosynthesis; pyridoxine 5'-phosphate from D-erythrose 4-phosphate: step 3/5. Its function is as follows. Catalyzes the reversible conversion of 3-phosphohydroxypyruvate to phosphoserine and of 3-hydroxy-2-oxo-4-phosphonooxybutanoate to phosphohydroxythreonine. The chain is Phosphoserine aminotransferase from Porphyromonas gingivalis (strain ATCC 33277 / DSM 20709 / CIP 103683 / JCM 12257 / NCTC 11834 / 2561).